The primary structure comprises 166 residues: MKLSTKVTELTNIIAPAVAACDVALWGIEFAPQGNRSLLRIYIEALPEEQAQNKQVTIENCAAVNHQVSGILEVHDPISGEFILEVSSPGFDRAFFSDEQMHAYVGQTVSLRLIQAIGEGDKKRRKATGTLNSIDATSLKLTATDGEQFEIALSNIDKANLIYEDA.

The protein belongs to the RimP family.

It is found in the cytoplasm. In terms of biological role, required for maturation of 30S ribosomal subunits. In Psychrobacter cryohalolentis (strain ATCC BAA-1226 / DSM 17306 / VKM B-2378 / K5), this protein is Ribosome maturation factor RimP.